The primary structure comprises 92 residues: Small ribosomal subunit protein uS19 (92 aa).

The protein belongs to the universal ribosomal protein uS19 family.

In terms of biological role, protein S19 forms a complex with S13 that binds strongly to the 16S ribosomal RNA. In Bacillus mycoides (strain KBAB4) (Bacillus weihenstephanensis), this protein is Small ribosomal subunit protein uS19.